A 72-amino-acid chain; its full sequence is DNA-directed RNA polymerase subunit omega (72 aa).

Belongs to the RNA polymerase subunit omega family. The RNAP catalytic core consists of 2 alpha, 1 beta, 1 beta' and 1 omega subunit. When a sigma factor is associated with the core the holoenzyme is formed, which can initiate transcription.

It catalyses the reaction RNA(n) + a ribonucleoside 5'-triphosphate = RNA(n+1) + diphosphate. In terms of biological role, promotes RNA polymerase assembly. Latches the N- and C-terminal regions of the beta' subunit thereby facilitating its interaction with the beta and alpha subunits. In Clostridium kluyveri (strain NBRC 12016), this protein is DNA-directed RNA polymerase subunit omega.